The chain runs to 257 residues: UPF0246 protein swp_3736 (257 aa).

Belongs to the UPF0246 family.

The protein is UPF0246 protein swp_3736 of Shewanella piezotolerans (strain WP3 / JCM 13877).